The following is a 152-amino-acid chain: Large ribosomal subunit protein uL15 (152 aa).

A disordered region spans residues 1-66; the sequence is MLQLHTIKPN…PLHRRLPKKG (66 aa). Gly residues predominate over residues 24-36; it reads ESSGLGKTCGKGN.

The protein belongs to the universal ribosomal protein uL15 family. In terms of assembly, part of the 50S ribosomal subunit.

Its function is as follows. Binds to the 23S rRNA. In Akkermansia muciniphila (strain ATCC BAA-835 / DSM 22959 / JCM 33894 / BCRC 81048 / CCUG 64013 / CIP 107961 / Muc), this protein is Large ribosomal subunit protein uL15.